The primary structure comprises 181 residues: Cyclic AMP-dependent transcription factor ATF-3 (181 aa).

Residues 76–97 are disordered; sequence VTKAEVAPEEDERKKRRRERNK. Residue Lys78 forms a Glycyl lysine isopeptide (Lys-Gly) (interchain with G-Cter in SUMO2) linkage. One can recognise a bZIP domain in the interval 86 to 149; that stretch reads DERKKRRRER…QHLIYMLNLH (64 aa). Residues 88-110 are basic motif; sequence RKKRRRERNKIAAAKCRNKKKEK. The tract at residues 114–142 is leucine-zipper; the sequence is LQKESEKLESVNAELKAQIEELKNEKQHL. A Phosphothreonine modification is found at Thr162. Residue Lys175 forms a Glycyl lysine isopeptide (Lys-Gly) (interchain with G-Cter in SUMO2) linkage.

The protein belongs to the bZIP family. ATF subfamily. In terms of assembly, binds DNA as a homodimer or a heterodimer. Interacts with KAT5; promoting KAT5 autoacetylation and KAT5 deubiquitination by USP7.

It localises to the nucleus. This protein binds the cAMP response element (CRE) (consensus: 5'-GTGACGT[AC][AG]-3'), a sequence present in many viral and cellular promoters. Represses transcription from promoters with ATF sites. It may repress transcription by stabilizing the binding of inhibitory cofactors at the promoter. The polypeptide is Cyclic AMP-dependent transcription factor ATF-3 (ATF3) (Bos taurus (Bovine)).